The following is a 349-amino-acid chain: Paired box protein Pax-4 (349 aa).

The segment at residues 5–131 (GLSSVNQLGG…SSINRVLRAL (127 aa)) is a DNA-binding region (paired). Positions 8–64 (SVNQLGGLFVNGRPLPLDTRQQIVQLAIRGMRPCDISRSLKVSNGCVSKILGRYYRT) are PAI subdomain. Positions 83 to 131 (AVVARIAQLKDEYPALFAWEIQHQLCTEGLCTQDKAPSVSSINRVLRAL) are RED subdomain. A DNA-binding region (homeobox) is located at residues 170 to 229 (SHRNRTIFSPGQAEALEKEFQRGQYPDSVARGKLAAATSLPEDTVRVWFSNRRAKWRRQE). The segment at 278–349 (FCQLCCGTAP…VPSTHCSNWP (72 aa)) is transcription repression.

The protein belongs to the paired homeobox family. Expressed in early pancreas. Later restricted to beta cells. Undetectable in adult islets.

It is found in the nucleus. Its function is as follows. Plays an important role in the differentiation and development of pancreatic islet beta cells. Transcriptional repressor that competes with PAX6 in binding to a common element in the glucagon, insulin and somatostatin promoters. This Mus musculus (Mouse) protein is Paired box protein Pax-4 (Pax4).